The sequence spans 113 residues: Holo-[acyl-carrier-protein] synthase (113 aa).

2 residues coordinate Mg(2+): aspartate 5 and glutamate 50.

This sequence belongs to the P-Pant transferase superfamily. AcpS family. It depends on Mg(2+) as a cofactor.

Its subcellular location is the cytoplasm. It carries out the reaction apo-[ACP] + CoA = holo-[ACP] + adenosine 3',5'-bisphosphate + H(+). Its function is as follows. Transfers the 4'-phosphopantetheine moiety from coenzyme A to a Ser of acyl-carrier-protein. The chain is Holo-[acyl-carrier-protein] synthase from Nautilia profundicola (strain ATCC BAA-1463 / DSM 18972 / AmH).